Here is a 218-residue protein sequence, read N- to C-terminus: Ras-related protein Rab-4A (218 aa).

Residues G23, T24, G25, K26, S27, C28, S42, H44, and T45 each contribute to the GTP site. S27 provides a ligand contact to Mg(2+). Positions 44–49 (HTIGVE) match the Switch 1 motif. T45 and D68 together coordinate Mg(2+). The Switch 2 signature appears at 70-79 (AGQERFRSVT). Residue G71 coordinates GTP. A 5-glutamyl serotonin modification is found at Q72. Residues N126, K127, D129, A157, and L158 each contribute to the GTP site. S190 carries the phosphoserine modification. A Phosphoserine; by CDK1 modification is found at S204. 2 S-geranylgeranyl cysteine lipidation sites follow: C216 and C218. Cysteine methyl ester is present on C218.

This sequence belongs to the small GTPase superfamily. Rab family. Interacts with SGSM1, SGSM2 and SGSM3. Interacts with RAB11FIP1, RABEP1, ZFYVE20 and RUFY1. Interacts (membrane-bound form) with NDRG1; the interaction involves NDRG1 in vesicular recycling of E-cadherin. Interacts (in GTP-bound form) with GRIPAP1 (via N-terminus). Interacts with RABEP1 and RBSN. Does not interact with HPS4. Interacts with RABEP2; this interaction may mediate VEGFR2 cell surface expression. Requires Mg(2+) as cofactor. In terms of processing, serotonylation of Gln-72 by TGM2 during activation and aggregation of platelets leads to constitutive activation of GTPase activity. Post-translationally, phosphorylated by CDK1 kinase during mitosis.

Its subcellular location is the membrane. It is found in the cytoplasm. The protein resides in the early endosome membrane. It localises to the recycling endosome membrane. It catalyses the reaction GTP + H2O = GDP + phosphate + H(+). Its activity is regulated as follows. Regulated by guanine nucleotide exchange factors (GEFs) which promote the exchange of bound GDP for free GTP. Regulated by GTPase activating proteins (GAPs) which increase the GTP hydrolysis activity. Inhibited by GDP dissociation inhibitors (GDIs). Functionally, the small GTPases Rab are key regulators of intracellular membrane trafficking, from the formation of transport vesicles to their fusion with membranes. Rabs cycle between an inactive GDP-bound form and an active GTP-bound form that is able to recruit to membranes different sets of downstream effectors directly responsible for vesicle formation, movement, tethering and fusion. RAB4A is involved in protein transport. Also plays a role in vesicular traffic. Mediates VEGFR2 endosomal trafficking to enhance VEGFR2 signaling. Acts as a regulator of platelet alpha-granule release during activation and aggregation of platelets. This Rattus norvegicus (Rat) protein is Ras-related protein Rab-4A.